The primary structure comprises 116 residues: Large ribosomal subunit protein bL19 (116 aa).

It belongs to the bacterial ribosomal protein bL19 family.

In terms of biological role, this protein is located at the 30S-50S ribosomal subunit interface and may play a role in the structure and function of the aminoacyl-tRNA binding site. This is Large ribosomal subunit protein bL19 from Streptomyces avermitilis (strain ATCC 31267 / DSM 46492 / JCM 5070 / NBRC 14893 / NCIMB 12804 / NRRL 8165 / MA-4680).